The chain runs to 211 residues: Histidine biosynthesis bifunctional protein HisIE (211 aa).

Positions 1-107 are phosphoribosyl-AMP cyclohydrolase; that stretch reads MNKLIDFSKG…FNSEIESRFK (107 aa). Positions 108–211 are phosphoribosyl-ATP pyrophosphohydrolase; the sequence is IQALAQTIHQ…KGERKKVQEW (104 aa).

In the N-terminal section; belongs to the PRA-CH family. This sequence in the C-terminal section; belongs to the PRA-PH family.

It localises to the cytoplasm. It catalyses the reaction 1-(5-phospho-beta-D-ribosyl)-ATP + H2O = 1-(5-phospho-beta-D-ribosyl)-5'-AMP + diphosphate + H(+). It carries out the reaction 1-(5-phospho-beta-D-ribosyl)-5'-AMP + H2O = 1-(5-phospho-beta-D-ribosyl)-5-[(5-phospho-beta-D-ribosylamino)methylideneamino]imidazole-4-carboxamide. Its pathway is amino-acid biosynthesis; L-histidine biosynthesis; L-histidine from 5-phospho-alpha-D-ribose 1-diphosphate: step 2/9. It functions in the pathway amino-acid biosynthesis; L-histidine biosynthesis; L-histidine from 5-phospho-alpha-D-ribose 1-diphosphate: step 3/9. This chain is Histidine biosynthesis bifunctional protein HisIE, found in Staphylococcus epidermidis (strain ATCC 12228 / FDA PCI 1200).